The chain runs to 724 residues: ATPase family protein 2 homolog (724 aa).

ATP-binding positions include 281 to 287 (PGSGKTL) and 503 to 508 (GCSKTL).

It belongs to the AAA ATPase family. AFG2 subfamily. In terms of assembly, homohexamer; ATP binding induces oligomerization. Forms a ring-shaped particle of about 12 nm diameter, that displays 6-fold radial symmetry. Interacts (via N-terminus) with kinase air-2; the interaction is direct and inhibits air-2 kinase activity in an ATPase-dependent manner.

Its subcellular location is the cytoplasm. The catalysed reaction is ATP + H2O = ADP + phosphate + H(+). Its function is as follows. ATP-dependent chaperone which uses the energy provided by ATP hydrolysis to generate mechanical force to disassemble protein complexes. Required for various steps of embryonic mitosis including centrosome duplication, spindle assembly, ER dynamics and cell cycle progression. Regulates the stability and activity of kinase air-2, a component of the chromosomal passenger complex (CPC). Inhibits air-2 kinase activity from metaphase to late telophase and negatively regulates air-2 stability during mitotic exit. Controls ER transition into sheet-like structures at the onset of mitosis, possibly by regulating homotypic membrane fusion. The sequence is that of ATPase family protein 2 homolog from Caenorhabditis elegans.